The sequence spans 150 residues: UPF0735 ACT domain-containing protein Helmi_18680 (150 aa).

Positions 72–147 (SVSLLLEHHP…GVRSAQLVGS (76 aa)) constitute an ACT domain.

Belongs to the UPF0735 family.

This Heliobacterium modesticaldum (strain ATCC 51547 / Ice1) protein is UPF0735 ACT domain-containing protein Helmi_18680.